We begin with the raw amino-acid sequence, 306 residues long: Ornithine carbamoyltransferase (306 aa).

Residues 53 to 56, Q80, R104, and 131 to 134 each bind carbamoyl phosphate; these read STRT and HPCQ. L-ornithine contacts are provided by residues N162, D219, and 223–224; that span reads SM. Residues 259 to 260 and R287 each bind carbamoyl phosphate; that span reads CL.

It belongs to the aspartate/ornithine carbamoyltransferase superfamily. OTCase family.

The protein resides in the cytoplasm. The catalysed reaction is carbamoyl phosphate + L-ornithine = L-citrulline + phosphate + H(+). It participates in amino-acid biosynthesis; L-arginine biosynthesis; L-arginine from L-ornithine and carbamoyl phosphate: step 1/3. Its function is as follows. Reversibly catalyzes the transfer of the carbamoyl group from carbamoyl phosphate (CP) to the N(epsilon) atom of ornithine (ORN) to produce L-citrulline. This Acinetobacter baumannii (strain ATCC 17978 / DSM 105126 / CIP 53.77 / LMG 1025 / NCDC KC755 / 5377) protein is Ornithine carbamoyltransferase.